Here is a 91-residue protein sequence, read N- to C-terminus: MEACCKKSRKANSDPTRKNWLNLPLLALIKVYRYAISPLLGPRCRFEPTCSSYAEQALIEHGPFKGTMLALSRLSKCHPWHAGGYDPVPKK.

The protein belongs to the UPF0161 family.

It localises to the cell inner membrane. Functionally, could be involved in insertion of integral membrane proteins into the membrane. This is Putative membrane protein insertion efficiency factor from Saccharophagus degradans (strain 2-40 / ATCC 43961 / DSM 17024).